A 471-amino-acid polypeptide reads, in one-letter code: Abscission/NoCut checkpoint regulator (471 aa).

The disordered stretch occupies residues glycine 39 to leucine 64. An FYVE-type zinc finger spans residues alanine 74–threonine 133. Zn(2+) contacts are provided by cysteine 80, cysteine 83, cysteine 96, cysteine 99, cysteine 104, cysteine 107, cysteine 125, and cysteine 128. Residue serine 144 is modified to Phosphoserine. The MIM1-A signature appears at aspartate 174–glutamate 187. A Glycyl lysine isopeptide (Lys-Gly) (interchain with G-Cter in SUMO2) cross-link involves residue lysine 207. Threonine 243 bears the Phosphothreonine mark. Residues lysine 271–tryptophan 299 form a disordered region. Residues serine 278–tryptophan 299 are compositionally biased toward polar residues. Residues glycine 286 and serine 293 each carry the phosphoserine modification. Residues glutamate 311–alanine 375 adopt a coiled-coil conformation. The MIM1-B signature appears at isoleucine 326–glutamine 339. Serine 354 bears the Phosphoserine mark. The tract at residues proline 386–glutamate 412 is disordered. Serine 463 bears the Phosphoserine mark.

In terms of assembly, interacts (via MIM1-B) with VPS4A; interaction takes place at the midbody ring following cytokinesis checkpoint activation. Phosphorylated in vitro at Ser-22 by AURKB; however, phosphorylation at this site could not be confirmed in vivo. Detected in brain, heart, skeletal muscle and kidney. Expressed in the liver (at protein level).

It localises to the cytoplasm. The protein localises to the cytoskeleton. Its subcellular location is the microtubule organizing center. It is found in the centrosome. The protein resides in the cleavage furrow. It localises to the midbody. The protein localises to the midbody ring. Key regulator of abscission step in cytokinesis: part of the cytokinesis checkpoint, a process required to delay abscission to prevent both premature resolution of intercellular chromosome bridges and accumulation of DNA damage. Together with CHMP4C, required to retain abscission-competent VPS4 (VPS4A and/or VPS4B) at the midbody ring until abscission checkpoint signaling is terminated at late cytokinesis. Deactivation of AURKB results in dephosphorylation of CHMP4C followed by its dissociation from ZFYVE19/ANCHR and VPS4 and subsequent abscission. This chain is Abscission/NoCut checkpoint regulator (ZFYVE19), found in Homo sapiens (Human).